We begin with the raw amino-acid sequence, 661 residues long: uncharacterized protein (661 aa).

The N-terminal stretch at 1–24 is a signal peptide; the sequence is MKTLKTLKIFIIVFIASVSLASFA. Transmembrane regions (helical) follow at residues 226–246, 254–274, 410–430, 436–456, 469–489, and 562–582; these read IIGA…ALNT, IALF…LGPL, IILA…LYFI, CMIT…MALF, VCIS…LLIT, and VVSI…FYYF. The interval 629-661 is disordered; it reads GKPLVGDKPGVGGKRKEGEQQGGDLASGSGGGK.

The protein belongs to the TrbL/VirB6 family.

The protein localises to the cell membrane. This is an uncharacterized protein from Rickettsia conorii (strain ATCC VR-613 / Malish 7).